A 212-amino-acid chain; its full sequence is Peptide methionine sulfoxide reductase MsrA (212 aa).

C52 is an active-site residue.

Belongs to the MsrA Met sulfoxide reductase family.

It catalyses the reaction L-methionyl-[protein] + [thioredoxin]-disulfide + H2O = L-methionyl-(S)-S-oxide-[protein] + [thioredoxin]-dithiol. The enzyme catalyses [thioredoxin]-disulfide + L-methionine + H2O = L-methionine (S)-S-oxide + [thioredoxin]-dithiol. Its function is as follows. Has an important function as a repair enzyme for proteins that have been inactivated by oxidation. Catalyzes the reversible oxidation-reduction of methionine sulfoxide in proteins to methionine. In Escherichia coli O127:H6 (strain E2348/69 / EPEC), this protein is Peptide methionine sulfoxide reductase MsrA.